Here is a 416-residue protein sequence, read N- to C-terminus: Gamma-glutamyl phosphate reductase (416 aa).

It belongs to the gamma-glutamyl phosphate reductase family.

The protein localises to the cytoplasm. It catalyses the reaction L-glutamate 5-semialdehyde + phosphate + NADP(+) = L-glutamyl 5-phosphate + NADPH + H(+). The protein operates within amino-acid biosynthesis; L-proline biosynthesis; L-glutamate 5-semialdehyde from L-glutamate: step 2/2. Functionally, catalyzes the NADPH-dependent reduction of L-glutamate 5-phosphate into L-glutamate 5-semialdehyde and phosphate. The product spontaneously undergoes cyclization to form 1-pyrroline-5-carboxylate. The sequence is that of Gamma-glutamyl phosphate reductase from Salmonella heidelberg (strain SL476).